Reading from the N-terminus, the 529-residue chain is Listeriolysin O (529 aa).

A signal peptide spans 1 to 24 (MKKIMLVFITLILVSLPIAQQTEA). The tract at residues 35–54 (SISSMAPPASPPASPKTPIE) is disordered. 4 beta stranded membrane passes run 214-227 (ESQL…AFKA), 234-243 (VNFGAISEGK), 312-321 (STKVKAAFDA), and 329-341 (SGDV…IKNS). The short motif at 483 to 493 (ECTGLAWEWWR) is the Conserved undecapeptide element. The Cholesterol binding signature appears at 515-516 (TL).

It belongs to the cholesterol-dependent cytolysin family. In terms of assembly, homooligomeric pore complex of 35 to 50 subunits; when inserted in the host membrane.

It localises to the secreted. The protein resides in the host membrane. Its subcellular location is the host cell membrane. With respect to regulation, activity of listeriolysin O is regulated on multiple levels. It should be high in the phagosome, thereby allowing escape of the bacteria from the phagosomal compartment. Then, once inside the host cytosol, the activity must be controlled to prevent lysis of the host plasma membrane and loss of the intracellular environment. A cholesterol-dependent toxin that causes cytolysis by forming pores in cholesterol containing host membranes. After binding to target membranes, the protein undergoes a major conformation change, leading to its insertion in the host membrane and formation of an oligomeric pore complex. Cholesterol is required for binding to host membranes, membrane insertion and pore formation; cholesterol binding is mediated by a Thr-Leu pair in the C-terminus. Acts as a major virulence factor required for the escape of bacteria from phagosomal vacuoles and entry into the host cytosol. Can be reversibly inactivated by oxidation. In Listeria monocytogenes serotype 1/2a (strain 08-5578), this protein is Listeriolysin O (hly).